Reading from the N-terminus, the 659-residue chain is Macrolide export ATP-binding/permease protein MacB (659 aa).

The ABC transporter domain maps to 10–249 (IELRGIRKRY…QPLLHHAGLS (240 aa)). 47–54 (GSSGSGKS) contributes to the ATP binding site. A run of 4 helical transmembrane segments spans residues 287–307 (SLTLLGIVIGVASVIVMLAIG), 538–558 (LGLVAAVSLLVGGIGVMNVML), 594–614 (ITGGTVGVILGLTVGALLVFW), and 619–639 (VFSFGVMIGAFACAVITGLIF).

It belongs to the ABC transporter superfamily. Macrolide exporter (TC 3.A.1.122) family. As to quaternary structure, homodimer.

It localises to the cell inner membrane. Non-canonical ABC transporter that contains transmembrane domains (TMD), which form a pore in the inner membrane, and an ATP-binding domain (NBD), which is responsible for energy generation. Confers resistance against macrolides. The protein is Macrolide export ATP-binding/permease protein MacB of Nitrosomonas europaea (strain ATCC 19718 / CIP 103999 / KCTC 2705 / NBRC 14298).